Reading from the N-terminus, the 460-residue chain is GTPase Der (460 aa).

EngA-type G domains follow at residues 3-167 (FTFA…PEPD) and 189-364 (IRVA…AVWN). Residues 9-16 (GRPNVGKS), 56-60 (DTAGL), 119-122 (NKSE), 195-202 (GRPNAGKS), 242-246 (DTAGL), and 307-310 (NKWD) contribute to the GTP site. The KH-like domain maps to 365-449 (TRVPTAALNR…PVRIMLREKA (85 aa)).

The protein belongs to the TRAFAC class TrmE-Era-EngA-EngB-Septin-like GTPase superfamily. EngA (Der) GTPase family. In terms of assembly, associates with the 50S ribosomal subunit.

In terms of biological role, GTPase that plays an essential role in the late steps of ribosome biogenesis. The sequence is that of GTPase Der from Rhodopseudomonas palustris (strain BisB5).